The primary structure comprises 271 residues: Short-chain dehydrogenase PC-15 (271 aa).

Ile-8, Thr-34, Lys-40, Asp-56, Asn-84, Tyr-148, Lys-152, Val-181, and Thr-183 together coordinate NADP(+). The active-site Proton acceptor is the Tyr-148. The active-site Lowers pKa of active site Tyr is the Lys-152.

This sequence belongs to the short-chain dehydrogenases/reductases (SDR) family.

The protein operates within secondary metabolite biosynthesis. Functionally, short-chain dehydrogenase; part of the gene cluster that mediates the biosynthesis of the indole diterpenes penitrems. The geranylgeranyl diphosphate (GGPP) synthase penG catalyzes the first step in penitrem biosynthesis via conversion of farnesyl pyrophosphate and isopentyl pyrophosphate into geranylgeranyl pyrophosphate (GGPP). Condensation of indole-3-glycerol phosphate with GGPP by the prenyl transferase penC then forms 3-geranylgeranylindole (3-GGI). Epoxidation by the FAD-dependent monooxygenase penM leads to a epoxidized-GGI that is substrate of the terpene cyclase penB for cyclization to yield paspaline. Paspaline is subsequently converted to 13-desoxypaxilline by the cytochrome P450 monooxygenase penP, the latter being then converted to paxilline by the cytochrome P450 monooxygenase penQ. Paxilline is converted to beta-paxitriol via C-10 ketoreduction by the short-chain dehydrogenase PC-15 which can be monoprenylated at the C-20 by the indole diterpene prenyltransferase penD. A two-step elimination (acetylation and elimination) process performed by the O-acetyltransferase PC-16 and the P.simplicissimum ptmI-ortholog not yet identified in P.crustosum, leads to the production of the prenylated form of penijanthine. The FAD-linked oxidoreductase ptmO then converts the prenylated form of penijanthine into PC-M5 which is in turn transformed into PC-M4 by the aromatic dimethylallyltransferase PC-22. A series of oxidation steps involving 4 cytochrome P450 monooxygenases (PC-21, PC-05, PC-23, PC-20) and a FAD-dependent monooxygenase (PC-14) are required for the transformation of PC-M4 to penitrems A and E. Synthesis of these final products is proposed to proceed via penitrems D and C (PC-21, PC-05, PC-14) and penitrems B and F (PC-21, PC-05, PC-14, PC-23). The chain is Short-chain dehydrogenase PC-15 from Penicillium crustosum (Blue mold fungus).